The following is a 103-amino-acid chain: Large ribosomal subunit protein bL21 (103 aa).

Belongs to the bacterial ribosomal protein bL21 family. As to quaternary structure, part of the 50S ribosomal subunit. Contacts protein L20.

This protein binds to 23S rRNA in the presence of protein L20. The chain is Large ribosomal subunit protein bL21 from Shewanella putrefaciens (strain CN-32 / ATCC BAA-453).